The sequence spans 487 residues: Glutamyl-tRNA(Gln) amidotransferase subunit A (487 aa).

Active-site charge relay system residues include K74 and S149. S173 functions as the Acyl-ester intermediate in the catalytic mechanism.

Belongs to the amidase family. GatA subfamily. As to quaternary structure, heterotrimer of A, B and C subunits.

The catalysed reaction is L-glutamyl-tRNA(Gln) + L-glutamine + ATP + H2O = L-glutaminyl-tRNA(Gln) + L-glutamate + ADP + phosphate + H(+). Allows the formation of correctly charged Gln-tRNA(Gln) through the transamidation of misacylated Glu-tRNA(Gln) in organisms which lack glutaminyl-tRNA synthetase. The reaction takes place in the presence of glutamine and ATP through an activated gamma-phospho-Glu-tRNA(Gln). This is Glutamyl-tRNA(Gln) amidotransferase subunit A from Prochlorococcus marinus (strain MIT 9211).